Consider the following 47-residue polypeptide: Photosystem II reaction center protein Psb30 (47 aa).

A helical membrane pass occupies residues 19 to 39; that stretch reads VIFQLLSVALIVIAGPVVIFL.

Belongs to the Psb30/Ycf12 family. As to quaternary structure, PSII is composed of 1 copy each of membrane proteins PsbA, PsbB, PsbC, PsbD, PsbE, PsbF, PsbH, PsbI, PsbJ, PsbK, PsbL, PsbM, PsbT, PsbX, PsbY, PsbZ, Psb30/Ycf12, peripheral proteins PsbO, CyanoQ (PsbQ), PsbU, PsbV and a large number of cofactors. It forms dimeric complexes.

The protein localises to the cellular thylakoid membrane. Its function is as follows. A core subunit of photosystem II (PSII), probably helps stabilize the reaction center. In Nostoc punctiforme (strain ATCC 29133 / PCC 73102), this protein is Photosystem II reaction center protein Psb30.